A 532-amino-acid polypeptide reads, in one-letter code: NADH-quinone oxidoreductase subunit N 2 (532 aa).

Transmembrane regions (helical) follow at residues 37 to 57 (VAPP…DLFL), 63 to 83 (RLLG…LIPL), 107 to 127 (FTLV…LLSL), 133 to 153 (LPAG…ALLP), 158 to 178 (LATL…LVGI), 192 to 212 (FFLS…FVYA), 241 to 261 (VALT…HFWV), 276 to 296 (LSVV…VVAF), 302 to 322 (VWGP…NVAA), 336 to 356 (LLAW…AAAA), 367 to 387 (VAYA…AAVV), 411 to 431 (LALG…IGLF), 444 to 464 (GLGW…YYYL), and 504 to 524 (TAIV…QTVL).

It belongs to the complex I subunit 2 family. NDH-1 is composed of 14 different subunits. Subunits NuoA, H, J, K, L, M, N constitute the membrane sector of the complex.

Its subcellular location is the cell membrane. It carries out the reaction a quinone + NADH + 5 H(+)(in) = a quinol + NAD(+) + 4 H(+)(out). NDH-1 shuttles electrons from NADH, via FMN and iron-sulfur (Fe-S) centers, to quinones in the respiratory chain. The immediate electron acceptor for the enzyme in this species is believed to be a menaquinone. Couples the redox reaction to proton translocation (for every two electrons transferred, four hydrogen ions are translocated across the cytoplasmic membrane), and thus conserves the redox energy in a proton gradient. In Streptomyces griseus subsp. griseus (strain JCM 4626 / CBS 651.72 / NBRC 13350 / KCC S-0626 / ISP 5235), this protein is NADH-quinone oxidoreductase subunit N 2.